A 91-amino-acid chain; its full sequence is Non-specific lipid-transfer protein P3 (91 aa).

Disulfide bonds link cysteine 3–cysteine 50, cysteine 13–cysteine 27, cysteine 28–cysteine 73, and cysteine 48–cysteine 87.

The protein localises to the secreted. Functionally, plant non-specific lipid-transfer proteins transfer phospholipids as well as galactolipids across membranes. May play a role in wax or cutin deposition in the cell walls of expanding epidermal cells and certain secretory tissues. This Vitis sp. (Grape) protein is Non-specific lipid-transfer protein P3.